Reading from the N-terminus, the 293-residue chain is Ribosomal protein L11 methyltransferase (293 aa).

S-adenosyl-L-methionine-binding residues include Thr145, Gly166, Asp188, and Asn230.

Belongs to the methyltransferase superfamily. PrmA family.

It is found in the cytoplasm. It catalyses the reaction L-lysyl-[protein] + 3 S-adenosyl-L-methionine = N(6),N(6),N(6)-trimethyl-L-lysyl-[protein] + 3 S-adenosyl-L-homocysteine + 3 H(+). In terms of biological role, methylates ribosomal protein L11. The polypeptide is Ribosomal protein L11 methyltransferase (Pasteurella multocida (strain Pm70)).